Consider the following 439-residue polypeptide: ATP-dependent protease ATPase subunit HslU (439 aa).

Residues Ile17, 59-64, Asp251, Glu317, and Arg389 each bind ATP; that span reads GVGKTE.

The protein belongs to the ClpX chaperone family. HslU subfamily. A double ring-shaped homohexamer of HslV is capped on each side by a ring-shaped HslU homohexamer. The assembly of the HslU/HslV complex is dependent on binding of ATP.

The protein localises to the cytoplasm. In terms of biological role, ATPase subunit of a proteasome-like degradation complex; this subunit has chaperone activity. The binding of ATP and its subsequent hydrolysis by HslU are essential for unfolding of protein substrates subsequently hydrolyzed by HslV. HslU recognizes the N-terminal part of its protein substrates and unfolds these before they are guided to HslV for hydrolysis. The protein is ATP-dependent protease ATPase subunit HslU of Campylobacter jejuni subsp. jejuni serotype O:2 (strain ATCC 700819 / NCTC 11168).